The primary structure comprises 716 residues: Interleukin-31 receptor subunit alpha (716 aa).

The N-terminal stretch at 1–18 (MWTLALWAFSFLCKFSLA) is a signal peptide. Residues 19-499 (VLPTKPENIS…TNGVRINFKT (481 aa)) lie on the Extracellular side of the membrane. Fibronectin type-III domains follow at residues 23–115 (KPEN…IAKT), 117–211 (PPII…TMEE), 213–304 (PHVL…ILRI), 305–403 (PDVH…QAYA), and 408–502 (PLKG…TLSI). N-linked (GlcNAc...) asparagine glycans are attached at residues N36, N48, and N64. N382 is a glycosylation site (N-linked (GlcNAc...) asparagine). A helical membrane pass occupies residues 500–520 (LSISVFEIVLLTSLVGGGLLL). The Cytoplasmic segment spans residues 521–716 (LSIKTVTFGL…NIPEHSKGEV (196 aa)). Disordered stretches follow at residues 622–641 (EYVT…FKEP) and 648–696 (ASED…LKNS). Residues 670–679 (QPSSSCQSPG) show a composition bias toward polar residues.

This sequence belongs to the type I cytokine receptor family. Type 2 subfamily. Heterodimer with OSMR. Interacts with JAK1 and STAT3. In terms of processing, N-glycosylated. As to expression, expressed in a subset of dorsal root ganglia neurons. Expressed in spinal cord and trigeminal ganglion (at protein level). Expressed in skin, testis, bone marrow and thymus.

It is found in the cell membrane. It localises to the presynaptic cell membrane. The protein localises to the cell projection. Its subcellular location is the axon. Functionally, associates with OSMR to form the interleukin-31 receptor which activates STAT3 and to a lower extent STAT1 and STAT5. May function in skin immunity. Mediates IL31-induced itch, probably in a manner dependent on cation channels TRPA1 and TRPV1. Positively regulates numbers and cycling status of immature subsets of myeloid progenitor cells in bone marrow in vivo and enhances myeloid progenitor cell survival in vitro. This is Interleukin-31 receptor subunit alpha (Il31ra) from Mus musculus (Mouse).